A 914-amino-acid polypeptide reads, in one-letter code: Translation initiation factor IF-2 (914 aa).

Disordered stretches follow at residues 52-84 (GGGKAAEGAAKAPAKAAAKGDAKTAAKGDVKAP) and 98-326 (AGGN…GVRL). The span at 57-68 (AEGAAKAPAKAA) shows a compositional bias: low complexity. Residues 69-84 (AKGDAKTAAKGDVKAP) are compositionally biased toward basic and acidic residues. Over residues 98 to 138 (AGGNGEAAAPPAQPGGTATTPAAQATPEAPARPGPAAARPS) the composition is skewed to low complexity. Pro residues-rich tracts occupy residues 139–169 (APAPGQPKPPAPGQPPRPGATPGPRPGPAPK) and 193–207 (PRPVPRPGAPRPGAP). A compositionally biased stretch (gly residues) spans 236–296 (RPGGGRPGGP…GAAGAFGRPG (61 aa)). Basic residues predominate over residues 300–309 (RRGRKSKRQK). The tr-type G domain maps to 421–581 (TRPPVVTVMG…AVLLTADAAL (161 aa)). GTP contacts are provided by residues 430 to 437 (GHVDHGKT), 469 to 473 (DTPGH), and 523 to 526 (NKID).

This sequence belongs to the TRAFAC class translation factor GTPase superfamily. Classic translation factor GTPase family. IF-2 subfamily.

The protein localises to the cytoplasm. Its function is as follows. One of the essential components for the initiation of protein synthesis. Protects formylmethionyl-tRNA from spontaneous hydrolysis and promotes its binding to the 30S ribosomal subunits. Also involved in the hydrolysis of GTP during the formation of the 70S ribosomal complex. This chain is Translation initiation factor IF-2, found in Mycobacterium avium (strain 104).